The sequence spans 169 residues: S-ribosylhomocysteine lyase (169 aa).

The Fe cation site is built by His-54, His-58, and Cys-128.

It belongs to the LuxS family. In terms of assembly, homodimer. Requires Fe cation as cofactor.

It carries out the reaction S-(5-deoxy-D-ribos-5-yl)-L-homocysteine = (S)-4,5-dihydroxypentane-2,3-dione + L-homocysteine. In terms of biological role, involved in the synthesis of autoinducer 2 (AI-2) which is secreted by bacteria and is used to communicate both the cell density and the metabolic potential of the environment. The regulation of gene expression in response to changes in cell density is called quorum sensing. Catalyzes the transformation of S-ribosylhomocysteine (RHC) to homocysteine (HC) and 4,5-dihydroxy-2,3-pentadione (DPD). This is S-ribosylhomocysteine lyase from Shewanella loihica (strain ATCC BAA-1088 / PV-4).